Here is a 342-residue protein sequence, read N- to C-terminus: Phosphoribosylformylglycinamidine cyclo-ligase (342 aa).

The protein belongs to the AIR synthase family.

It is found in the cytoplasm. The enzyme catalyses 2-formamido-N(1)-(5-O-phospho-beta-D-ribosyl)acetamidine + ATP = 5-amino-1-(5-phospho-beta-D-ribosyl)imidazole + ADP + phosphate + H(+). It participates in purine metabolism; IMP biosynthesis via de novo pathway; 5-amino-1-(5-phospho-D-ribosyl)imidazole from N(2)-formyl-N(1)-(5-phospho-D-ribosyl)glycinamide: step 2/2. This Staphylococcus saprophyticus subsp. saprophyticus (strain ATCC 15305 / DSM 20229 / NCIMB 8711 / NCTC 7292 / S-41) protein is Phosphoribosylformylglycinamidine cyclo-ligase.